A 34-amino-acid polypeptide reads, in one-letter code: Photosystem II reaction center protein Psb30 (34 aa).

Residues 9 to 29 (QLIATGTIMLAGPAVIVLLAL) form a helical membrane-spanning segment.

This sequence belongs to the Psb30/Ycf12 family. As to quaternary structure, PSII is composed of 1 copy each of membrane proteins PsbA, PsbB, PsbC, PsbD, PsbE, PsbF, PsbH, PsbI, PsbJ, PsbK, PsbL, PsbM, PsbT, PsbX, PsbY, PsbZ, Psb30/Ycf12, peripheral proteins of the oxygen-evolving complex and a large number of cofactors. It forms dimeric complexes.

The protein localises to the plastid. The protein resides in the chloroplast thylakoid membrane. Its function is as follows. A core subunit of photosystem II (PSII), probably helps stabilize the reaction center. The polypeptide is Photosystem II reaction center protein Psb30 (Phaeodactylum tricornutum (strain CCAP 1055/1)).